The sequence spans 278 residues: Dermonecrotic toxin LlSicTox-alphaIII3ii (278 aa).

Residue histidine 5 is part of the active site. Residues glutamate 25 and aspartate 27 each coordinate Mg(2+). The active-site Nucleophile is histidine 40. Residues cysteine 44 and cysteine 50 are joined by a disulfide bond. Aspartate 84 provides a ligand contact to Mg(2+).

This sequence belongs to the arthropod phospholipase D family. Class I subfamily. It depends on Mg(2+) as a cofactor. Expressed by the venom gland.

It localises to the secreted. The enzyme catalyses an N-(acyl)-sphingosylphosphocholine = an N-(acyl)-sphingosyl-1,3-cyclic phosphate + choline. It catalyses the reaction an N-(acyl)-sphingosylphosphoethanolamine = an N-(acyl)-sphingosyl-1,3-cyclic phosphate + ethanolamine. It carries out the reaction a 1-acyl-sn-glycero-3-phosphocholine = a 1-acyl-sn-glycero-2,3-cyclic phosphate + choline. The catalysed reaction is a 1-acyl-sn-glycero-3-phosphoethanolamine = a 1-acyl-sn-glycero-2,3-cyclic phosphate + ethanolamine. Its function is as follows. Dermonecrotic toxins cleave the phosphodiester linkage between the phosphate and headgroup of certain phospholipids (sphingolipid and lysolipid substrates), forming an alcohol (often choline) and a cyclic phosphate. This toxin acts on sphingomyelin (SM). It may also act on ceramide phosphoethanolamine (CPE), lysophosphatidylcholine (LPC) and lysophosphatidylethanolamine (LPE), but not on lysophosphatidylserine (LPS), and lysophosphatidylglycerol (LPG). It acts by transphosphatidylation, releasing exclusively cyclic phosphate products as second products. Induces dermonecrosis, hemolysis, increased vascular permeability, edema, inflammatory response, and platelet aggregation. The sequence is that of Dermonecrotic toxin LlSicTox-alphaIII3ii from Loxosceles laeta (South American recluse spider).